A 346-amino-acid polypeptide reads, in one-letter code: Holliday junction branch migration complex subunit RuvB (346 aa).

The large ATPase domain (RuvB-L) stretch occupies residues 2-183 (TDDRIIGAGA…FGIVQRLEFY (182 aa)). ATP contacts are provided by residues Ile22, Arg23, Gly64, Lys67, Thr68, Thr69, 130-132 (EDF), Arg173, Tyr183, and Arg220. Thr68 provides a ligand contact to Mg(2+). The small ATPAse domain (RuvB-S) stretch occupies residues 184-254 (SVEELTRIVR…VAQAAMKMLK (71 aa)). The segment at 257–346 (PEGFDELDRR…DLFAEVPDVG (90 aa)) is head domain (RuvB-H). Residues Arg293, Arg312, and Arg317 each coordinate DNA.

This sequence belongs to the RuvB family. Homohexamer. Forms an RuvA(8)-RuvB(12)-Holliday junction (HJ) complex. HJ DNA is sandwiched between 2 RuvA tetramers; dsDNA enters through RuvA and exits via RuvB. An RuvB hexamer assembles on each DNA strand where it exits the tetramer. Each RuvB hexamer is contacted by two RuvA subunits (via domain III) on 2 adjacent RuvB subunits; this complex drives branch migration. In the full resolvosome a probable DNA-RuvA(4)-RuvB(12)-RuvC(2) complex forms which resolves the HJ.

The protein localises to the cytoplasm. The enzyme catalyses ATP + H2O = ADP + phosphate + H(+). Functionally, the RuvA-RuvB-RuvC complex processes Holliday junction (HJ) DNA during genetic recombination and DNA repair, while the RuvA-RuvB complex plays an important role in the rescue of blocked DNA replication forks via replication fork reversal (RFR). RuvA specifically binds to HJ cruciform DNA, conferring on it an open structure. The RuvB hexamer acts as an ATP-dependent pump, pulling dsDNA into and through the RuvAB complex. RuvB forms 2 homohexamers on either side of HJ DNA bound by 1 or 2 RuvA tetramers; 4 subunits per hexamer contact DNA at a time. Coordinated motions by a converter formed by DNA-disengaged RuvB subunits stimulates ATP hydrolysis and nucleotide exchange. Immobilization of the converter enables RuvB to convert the ATP-contained energy into a lever motion, pulling 2 nucleotides of DNA out of the RuvA tetramer per ATP hydrolyzed, thus driving DNA branch migration. The RuvB motors rotate together with the DNA substrate, which together with the progressing nucleotide cycle form the mechanistic basis for DNA recombination by continuous HJ branch migration. Branch migration allows RuvC to scan DNA until it finds its consensus sequence, where it cleaves and resolves cruciform DNA. This chain is Holliday junction branch migration complex subunit RuvB, found in Stenotrophomonas maltophilia (strain K279a).